Consider the following 231-residue polypeptide: Uracil-DNA glycosylase (231 aa).

Residue aspartate 74 is the Proton acceptor of the active site.

Belongs to the uracil-DNA glycosylase (UDG) superfamily. UNG family.

It localises to the cytoplasm. It catalyses the reaction Hydrolyzes single-stranded DNA or mismatched double-stranded DNA and polynucleotides, releasing free uracil.. In terms of biological role, excises uracil residues from the DNA which can arise as a result of misincorporation of dUMP residues by DNA polymerase or due to deamination of cytosine. This is Uracil-DNA glycosylase from Campylobacter jejuni (strain RM1221).